A 1204-amino-acid chain; its full sequence is TPR repeat-containing protein DDB_G0287999 (1204 aa).

A compositionally biased stretch (low complexity) spans 32–48; sequence TTDTTTTTSTSTTTDTD. The segment at 32–55 is disordered; it reads TTDTTTTTSTSTTTDTDTNSEKSN. 3 TPR repeats span residues 263 to 296, 379 to 412, and 583 to 617; these read SKGLLLMIEFYIKIGDIDSAFKFFEVNFKDYKDL, NDSNNIIKNSSSKLEFNDDCVSNYKKLVNFDQLY, and IQHFVETALIYLINDNSYQEAVKLYIYFLKEGSVT. The tract at residues 360–387 is disordered; that stretch reads QPPPQEQQLMDDDSNSNSNNDSNNIIKN. Over residues 374-387 the composition is skewed to low complexity; that stretch reads NSNSNNDSNNIIKN. Disordered regions lie at residues 639 to 660 and 761 to 797; these read NNNNNNNNNNNNNNNNNNNNNN and DDNDNDNNNNNNNNNNNNNDDDDGGGHGGGDVFKTTT. Residues 766–778 are compositionally biased toward low complexity; it reads DNNNNNNNNNNNN.

The sequence is that of TPR repeat-containing protein DDB_G0287999 from Dictyostelium discoideum (Social amoeba).